A 356-amino-acid chain; its full sequence is Arginine kinase (356 aa).

The Phosphagen kinase N-terminal domain occupies 8–91 (EKLEAGFKKL…FDPIIEDYHG (84 aa)). 64 to 68 (GVGIY) contributes to the substrate binding site. The Phosphagen kinase C-terminal domain occupies 119–356 (YVISTRVRCG…LELIKIEGSL (238 aa)). ATP contacts are provided by residues 122–126 (STRVR) and His185. Residue Glu225 participates in substrate binding. Position 229 (Arg229) interacts with ATP. Cys271 is a binding site for substrate. ATP contacts are provided by residues 280–284 (RASVH) and 309–314 (RGSTGE). Residue Glu314 participates in substrate binding.

This sequence belongs to the ATP:guanido phosphotransferase family.

It carries out the reaction L-arginine + ATP = N(omega)-phospho-L-arginine + ADP + H(+). This Schistocerca americana (American grasshopper) protein is Arginine kinase (ARGK).